We begin with the raw amino-acid sequence, 417 residues long: MLKKDMNIADYDPELFKAIQNETLRQEEHIELIASENYTSPRVMEAQGSQLTNKYAEGYPGKRYYGGCEYVDVVETLAIERAKELFSATYANVQPHSGSQANSAVYMALLKPGDTVLGMNLAHGGHLTHGSPVNFSGKLYNIIPYGIDESGKIDYDEMERLAVEHKPKMMIGGFSAYSGIVDWAKMREIADKIGAYLFVDMAHVAGLIAAGVYPNPVPHAHVVTSTTHKTLAGPRGGVILSAADDEDLYKKLNSAVFPGGQGGPLMHVIAGKAVAFKEALEPEFKVYQQQVVNNAKAMVEVFLERGYKIVSGGTSNHLMLVDLIGRDLTGKEADAALGSANITVNKNSVPNDPRSPFVTSGVRIGTPAITRRGFKEAESKELTGWICDILDDANNPAVIERVKGQVLALCARFPVYG.

Residues Leu121 and 125–127 (GHL) each bind (6S)-5,6,7,8-tetrahydrofolate. Lys229 bears the N6-(pyridoxal phosphate)lysine mark. 355–357 (SPF) contributes to the (6S)-5,6,7,8-tetrahydrofolate binding site.

The protein belongs to the SHMT family. As to quaternary structure, homodimer. It depends on pyridoxal 5'-phosphate as a cofactor.

Its subcellular location is the cytoplasm. It carries out the reaction (6R)-5,10-methylene-5,6,7,8-tetrahydrofolate + glycine + H2O = (6S)-5,6,7,8-tetrahydrofolate + L-serine. It participates in one-carbon metabolism; tetrahydrofolate interconversion. It functions in the pathway amino-acid biosynthesis; glycine biosynthesis; glycine from L-serine: step 1/1. In terms of biological role, catalyzes the reversible interconversion of serine and glycine with tetrahydrofolate (THF) serving as the one-carbon carrier. This reaction serves as the major source of one-carbon groups required for the biosynthesis of purines, thymidylate, methionine, and other important biomolecules. Also exhibits THF-independent aldolase activity toward beta-hydroxyamino acids, producing glycine and aldehydes, via a retro-aldol mechanism. In Shewanella baltica (strain OS185), this protein is Serine hydroxymethyltransferase.